Consider the following 443-residue polypeptide: Frizzled/smoothened-like sans CRD protein E (443 aa).

An N-terminal signal peptide occupies residues 1 to 23 (MISHIKKFINLYTIVFLLYILYS). Topologically, residues 24–83 (NENFFVKGQKLPPGFCPSPLIYRNTTDRQSDIDIGFQFLGETNCVQPCPSLILTENEWNK) are extracellular. N-linked (GlcNAc...) asparagine glycosylation occurs at N47. Residues 84-104 (VFNMSLVAGTISMFALIFLII) form a helical membrane-spanning segment. The Cytoplasmic portion of the chain corresponds to 105 to 120 (TYSPLVNNIKDYTRHT). Residues 121 to 141 (VGILFLFSGILIAMTTDGRQL) form a helical membrane-spanning segment. Over 142–166 (WDIDLGFKKYCPEPGRFARQSDSKC) the chain is Extracellular. Residues 167–187 (LVTAIFFQFGCVTALLWWAAI) traverse the membrane as a helical segment. At 188 to 203 (SVDLWITIKKIKISKK) the chain is on the cytoplasmic side. A helical transmembrane segment spans residues 204–224 (LFIIYTIAVNIVTIVLTFGPV). Over 225–248 (GSKQYGYIDAAIGCWLMDLKYQVG) the chain is Extracellular. The helical transmembrane segment at 249–269 (YFWAPVGFCLCVGCVSIVLIL) threads the bilayer. Topologically, residues 270–289 (KEIYNVSDAVKKKLLAKHLK) are cytoplasmic. Residues 290 to 310 (PLMLIILMLTEFIYMFIFYSY) form a helical membrane-spanning segment. Residues 311-350 (TTSKKNHYHDIIEEYVVCLFVHAANPSVCKIGSTISPSAH) are Extracellular-facing. Residues 351–371 (FFFHLCIRLMGLEVLIFYGFT) form a helical membrane-spanning segment. Over 372 to 443 (RQTRKIWMRS…SGIDDSKHDP (72 aa)) the chain is Cytoplasmic. Composition is skewed to low complexity over residues 397–410 (SSSN…NKTS) and 419–432 (ESSE…QSIE). Residues 397–443 (SSSNDSKSSNNKTSGRVTGGFGESSEQSNEPEQSIELSGIDDSKHDP) are disordered.

It belongs to the G-protein coupled receptor Fz/Smo family.

The protein localises to the membrane. The protein is Frizzled/smoothened-like sans CRD protein E (fscE) of Dictyostelium discoideum (Social amoeba).